We begin with the raw amino-acid sequence, 346 residues long: Ribosomal RNA small subunit methyltransferase H (346 aa).

S-adenosyl-L-methionine contacts are provided by residues 46–48 (GGY), Asp-63, Phe-90, Asp-113, and Gln-120. The interval 270–346 (GGSAGSRHMP…LPETNELARS (77 aa)) is disordered.

It belongs to the methyltransferase superfamily. RsmH family.

Its subcellular location is the cytoplasm. It catalyses the reaction cytidine(1402) in 16S rRNA + S-adenosyl-L-methionine = N(4)-methylcytidine(1402) in 16S rRNA + S-adenosyl-L-homocysteine + H(+). Specifically methylates the N4 position of cytidine in position 1402 (C1402) of 16S rRNA. This chain is Ribosomal RNA small subunit methyltransferase H, found in Brucella suis (strain ATCC 23445 / NCTC 10510).